The chain runs to 183 residues: 2-C-methyl-D-erythritol 2,4-cyclodiphosphate synthase (183 aa).

2 residues coordinate a divalent metal cation: Asp-10 and His-12. 4-CDP-2-C-methyl-D-erythritol 2-phosphate contacts are provided by residues 10–12 and 38–39; these read DVH and HS. Residue His-46 coordinates a divalent metal cation. 4-CDP-2-C-methyl-D-erythritol 2-phosphate contacts are provided by residues 60–62 and 65–69; these read DIG and FPDTD.

The protein belongs to the IspF family. Homotrimer. The cofactor is a divalent metal cation.

The enzyme catalyses 4-CDP-2-C-methyl-D-erythritol 2-phosphate = 2-C-methyl-D-erythritol 2,4-cyclic diphosphate + CMP. It participates in isoprenoid biosynthesis; isopentenyl diphosphate biosynthesis via DXP pathway; isopentenyl diphosphate from 1-deoxy-D-xylulose 5-phosphate: step 4/6. Its function is as follows. Involved in the biosynthesis of isopentenyl diphosphate (IPP) and dimethylallyl diphosphate (DMAPP), two major building blocks of isoprenoid compounds. Catalyzes the conversion of 4-diphosphocytidyl-2-C-methyl-D-erythritol 2-phosphate (CDP-ME2P) to 2-C-methyl-D-erythritol 2,4-cyclodiphosphate (ME-CPP) with a corresponding release of cytidine 5-monophosphate (CMP). This Verminephrobacter eiseniae (strain EF01-2) protein is 2-C-methyl-D-erythritol 2,4-cyclodiphosphate synthase.